We begin with the raw amino-acid sequence, 513 residues long: Light-independent protochlorophyllide reductase subunit B (513 aa).

Position 36 (D36) interacts with [4Fe-4S] cluster. D299 acts as the Proton donor in catalysis. A substrate-binding site is contributed by 434–435 (GM).

This sequence belongs to the ChlB/BchB/BchZ family. Protochlorophyllide reductase is composed of three subunits; ChlL, ChlN and ChlB. Forms a heterotetramer of two ChlB and two ChlN subunits. The cofactor is [4Fe-4S] cluster.

It localises to the plastid. It is found in the chloroplast. It catalyses the reaction chlorophyllide a + oxidized 2[4Fe-4S]-[ferredoxin] + 2 ADP + 2 phosphate = protochlorophyllide a + reduced 2[4Fe-4S]-[ferredoxin] + 2 ATP + 2 H2O. It participates in porphyrin-containing compound metabolism; chlorophyll biosynthesis (light-independent). Component of the dark-operative protochlorophyllide reductase (DPOR) that uses Mg-ATP and reduced ferredoxin to reduce ring D of protochlorophyllide (Pchlide) to form chlorophyllide a (Chlide). This reaction is light-independent. The NB-protein (ChlN-ChlB) is the catalytic component of the complex. The sequence is that of Light-independent protochlorophyllide reductase subunit B from Anthoceros angustus (Hornwort).